The sequence spans 224 residues: Large ribosomal subunit protein uL3 (224 aa).

Q159 carries the N5-methylglutamine modification.

The protein belongs to the universal ribosomal protein uL3 family. As to quaternary structure, part of the 50S ribosomal subunit. Forms a cluster with proteins L14 and L19. Post-translationally, methylated by PrmB.

Its function is as follows. One of the primary rRNA binding proteins, it binds directly near the 3'-end of the 23S rRNA, where it nucleates assembly of the 50S subunit. The chain is Large ribosomal subunit protein uL3 from Herminiimonas arsenicoxydans.